Reading from the N-terminus, the 396-residue chain is MITLFRKPFVAGLAISLLVGGGIGNVAAAQGGPPKSGVFGENEKRNDQPFAWQVASLSERYQEQFDIGAAVEPYQLEGRQAQILKHHYNSLVAENAMKPESLQPREGEWNWEGADKIVEFARKHNMELRFHTLVWHSQVPEWFFIDEDGNRMVDETDPDKREANKQLLLERMENHIKTVVERYKDDVTSWDVVNEVIDDGGGLRESEWYQITGTDYIKVAFETARKYGGEEAKLYINDYNTEVPSKRDDLYNLVKDLLEQGVPIDGVGHQSHIQIGWPSIEDTRASFEKFTSLGLDNQVTELDMSLYGWPPTGAYTSYDDIPAELLQAQADRYDQLFELYEELAADISSVTFWGIADNHTWLDGRAREYNNGVGIDAPFVFDHNYRVKPAYWRIID.

The first 28 residues, 1–28 (MITLFRKPFVAGLAISLLVGGGIGNVAA), serve as a signal peptide directing secretion. The region spanning 51 to 396 (AWQVASLSER…VKPAYWRIID (346 aa)) is the GH10 domain. E195 (proton donor) is an active-site residue. E301 acts as the Nucleophile in catalysis.

The protein belongs to the glycosyl hydrolase 10 (cellulase F) family.

Its subcellular location is the secreted. The enzyme catalyses Endohydrolysis of (1-&gt;4)-beta-D-xylosidic linkages in xylans.. The protein operates within glycan degradation; xylan degradation. This is Endo-1,4-beta-xylanase A (xynA) from Halalkalibacterium halodurans (strain ATCC BAA-125 / DSM 18197 / FERM 7344 / JCM 9153 / C-125) (Bacillus halodurans).